The following is a 163-amino-acid chain: Cyclic pyranopterin monophosphate synthase (163 aa).

Substrate contacts are provided by residues 76 to 78 and 114 to 115; these read LCH and ME. Asp-129 is a catalytic residue.

This sequence belongs to the MoaC family. Homohexamer; trimer of dimers.

The enzyme catalyses (8S)-3',8-cyclo-7,8-dihydroguanosine 5'-triphosphate = cyclic pyranopterin phosphate + diphosphate. Its pathway is cofactor biosynthesis; molybdopterin biosynthesis. Catalyzes the conversion of (8S)-3',8-cyclo-7,8-dihydroguanosine 5'-triphosphate to cyclic pyranopterin monophosphate (cPMP). The protein is Cyclic pyranopterin monophosphate synthase of Desulfovibrio desulfuricans (strain ATCC 27774 / DSM 6949 / MB).